A 123-amino-acid polypeptide reads, in one-letter code: Large ribosomal subunit protein bL12 (123 aa).

Belongs to the bacterial ribosomal protein bL12 family. In terms of assembly, homodimer. Part of the ribosomal stalk of the 50S ribosomal subunit. Forms a multimeric L10(L12)X complex, where L10 forms an elongated spine to which 2 to 4 L12 dimers bind in a sequential fashion. Binds GTP-bound translation factors.

In terms of biological role, forms part of the ribosomal stalk which helps the ribosome interact with GTP-bound translation factors. Is thus essential for accurate translation. The polypeptide is Large ribosomal subunit protein bL12 (Bartonella tribocorum (strain CIP 105476 / IBS 506)).